A 330-amino-acid polypeptide reads, in one-letter code: Phenylalanine--tRNA ligase alpha subunit (330 aa).

Glu-246 lines the Mg(2+) pocket.

It belongs to the class-II aminoacyl-tRNA synthetase family. Phe-tRNA synthetase alpha subunit type 1 subfamily. As to quaternary structure, tetramer of two alpha and two beta subunits. It depends on Mg(2+) as a cofactor.

Its subcellular location is the cytoplasm. The catalysed reaction is tRNA(Phe) + L-phenylalanine + ATP = L-phenylalanyl-tRNA(Phe) + AMP + diphosphate + H(+). The protein is Phenylalanine--tRNA ligase alpha subunit of Campylobacter jejuni subsp. jejuni serotype O:6 (strain 81116 / NCTC 11828).